The chain runs to 590 residues: Multidrug and toxin extrusion protein 1 (590 aa).

The Cytoplasmic segment spans residues 1 to 59; the sequence is MDSITSYNVTQMNGDTKQEKCDDVLSTSSTQKFCGGCRKKLRSLLPVNYKTEIVELLKL. The helical transmembrane segment at 60–80 threads the bilayer; sequence AGPVFISQLMIFLISFVSTVF. Topologically, residues 81-88 are extracellular; sequence CGHLGKTE. A helical transmembrane segment spans residues 89-109; it reads LAGVALAIAVINVTGISIGSG. Residues 110–137 are Cytoplasmic-facing; sequence LASACDTLISQTFGSNNLKRVGVILQRG. A helical transmembrane segment spans residues 138-158; sequence ILILLLACFPCWALLINTEPI. Residues 159-167 are Extracellular-facing; sequence LLAVRQSPN. Residues 168 to 188 traverse the membrane as a helical segment; it reads VASLSQLYVKIFMPALPAAFM. Over 189–199 the chain is Cytoplasmic; it reads YQLQGRYLQNQ. Residues 200–222 form a helical membrane-spanning segment; it reads GIIWPQVITGAAGNILNALINYV. Residues 223-231 lie on the Extracellular side of the membrane; it reads FLHLLELGV. The helical transmembrane segment at 232–254 threads the bilayer; it reads AGSAAANTISQYSLAVFLYVYIR. Over 255-274 the chain is Cytoplasmic; the sequence is WKNLHKATWDGWSRDCLQEW. A helical transmembrane segment spans residues 275–294; sequence GAFIRLALPSMLMLCVEWWT. The Extracellular portion of the chain corresponds to 295 to 313; it reads YEIGGFLAGLISETELGAQ. A helical transmembrane segment spans residues 314–334; that stretch reads SVVYELATIAYMFPLGFAVAA. Residues 335 to 351 lie on the Cytoplasmic side of the membrane; it reads SVRVGNALGAGNTERAK. A helical membrane pass occupies residues 352 to 372; sequence LSAKVALVCGVLVSCVVATLI. At 373–395 the chain is on the extracellular side; the sequence is GCTKDVIAYIFTTEEEIVSRVSQ. A helical membrane pass occupies residues 396-416; sequence VMIMYGFFHLFDAIAGITGGI. The Cytoplasmic portion of the chain corresponds to 417–430; the sequence is VRGAGKQLLGALCN. A helical transmembrane segment spans residues 431 to 451; it reads IVGYYFVGFPTGVSLMFALSM. Gly-452 is a topological domain (extracellular). A helical membrane pass occupies residues 453 to 473; sequence IIGLWIGFFGCVFLQSLFFII. Topologically, residues 474 to 565 are cytoplasmic; sequence LIYKLDWKKA…TTKQLIVRRG (92 aa). A helical transmembrane segment spans residues 566–586; sequence LAVLLMVLILAGGIVLNEMLV. Residues 587-590 lie on the Extracellular side of the membrane; that stretch reads RYLR.

This sequence belongs to the multi antimicrobial extrusion (MATE) (TC 2.A.66.1) family.

It localises to the cell membrane. Solute transporter for tetraethylammonium (TEA), cimetidine, metformin, guanidine, N-methylnicotinamide (NMN) and also the zwitterionic cephalosporin cephalexin. Responsible for the secretion of cationic drugs across the brush border membranes. This is Multidrug and toxin extrusion protein 1 (slc47a1) from Danio rerio (Zebrafish).